The chain runs to 406 residues: Methylthioribose-1-phosphate isomerase (406 aa).

Asp277 (proton donor) is an active-site residue.

The protein belongs to the eIF-2B alpha/beta/delta subunits family. MtnA subfamily.

Its subcellular location is the cytoplasm. It localises to the nucleus. It carries out the reaction 5-(methylsulfanyl)-alpha-D-ribose 1-phosphate = 5-(methylsulfanyl)-D-ribulose 1-phosphate. Its pathway is amino-acid biosynthesis; L-methionine biosynthesis via salvage pathway; L-methionine from S-methyl-5-thio-alpha-D-ribose 1-phosphate: step 1/6. Functionally, catalyzes the interconversion of methylthioribose-1-phosphate (MTR-1-P) into methylthioribulose-1-phosphate (MTRu-1-P). The polypeptide is Methylthioribose-1-phosphate isomerase (Debaryomyces hansenii (strain ATCC 36239 / CBS 767 / BCRC 21394 / JCM 1990 / NBRC 0083 / IGC 2968) (Yeast)).